The following is a 644-amino-acid chain: Sodium/hydrogen exchanger 9 (644 aa).

Over 1–20 (MAGQLRFTSGKDEDHFQHQG) the chain is Lumenal. Residues 21–41 (AVELLAFNFLLILTILTIWLF) traverse the membrane as a helical segment. Residues 42-45 (KNHR) lie on the Cytoplasmic side of the membrane. A helical membrane pass occupies residues 46-66 (FRFLHETGGAMVYGLIMGLIL). Residues 67–126 (RYATAPTDIDSGTVYNCGNLFFSPSTLLVNITDQVYEYKYQREINQHNISPHQGNAILEK) are Lumenal-facing. Residues 127–147 (MTFDPEIFFNVLLPPIIFHAG) traverse the membrane as a helical segment. Residues 148 to 164 (YSLKKRHFFQNLGSILT) lie on the Cytoplasmic side of the membrane. A helical transmembrane segment spans residues 165–185 (YAFLGTAISCVVIGLIMYGFV). Residues 186 to 203 (KAMVHAGQLKSGDFHFTD) lie on the Lumenal side of the membrane. The helical transmembrane segment at 204-224 (CLFFGSLMSATDPVTVLAIFH) threads the bilayer. The Cytoplasmic portion of the chain corresponds to 225 to 235 (ELHVDPDLYTL). The helical transmembrane segment at 236–256 (LFGESVLNDAVAIVLTYSISI) threads the bilayer. At 257–277 (YSPKENPNAFDTAAFFQSVGN) the chain is on the lumenal side. Residues 278–298 (FLGIFAGSFAMGSAYAVVTAL) traverse the membrane as a helical segment. The Cytoplasmic segment spans residues 299 to 309 (LTKFTKLREFP). A helical transmembrane segment spans residues 310–327 (MLETGLFFLLSWSAFLSA). At 328 to 333 (EAAGLT) the chain is on the lumenal side. A helical transmembrane segment spans residues 334 to 350 (GIVAVLFCGVTQAHYTY). Topologically, residues 351–364 (NNLSSDSKLRTKQL) are cytoplasmic. The chain crosses the membrane as a helical span at residues 365 to 385 (FEFMNFLAENVIFCYMGLALF). Residue T386 is a topological domain, lumenal. Residues 387-407 (FQNHIFNALFILGAFLAIFVA) traverse the membrane as a helical segment. Over 408 to 429 (RACNIYPLSFLLNLGRKQKIPW) the chain is Cytoplasmic. A helical membrane pass occupies residues 430 to 450 (NFQHMMMFSGLRGAIAFALAI). The Lumenal portion of the chain corresponds to 451-465 (RNTESQPKQMMFTTT). A helical transmembrane segment spans residues 466-486 (LLLVFFTVWVFGGGTTPMLTW). Over 487–644 (LQIRVGVDLD…EQTRGQPQMD (158 aa)) the chain is Cytoplasmic. The segment at 590-644 (YQEQSPSPSSPTTKLALDQKSSGQTPGKENIYEGDLGLGGYDLKLEQTRGQPQMD) is disordered.

Belongs to the monovalent cation:proton antiporter 1 (CPA1) transporter (TC 2.A.36) family. As to quaternary structure, homodimer; phosphatidylinositol-4,5-bisphosphate (PIP2) and phosphatidylinositol 3,4,5-trisphosphate (PIP3) could be involved in the dimer stabilization. Interacts (via the C-terminus) with RACK1. Interacts with CHP1. As to expression, expressed in the brain. Highly expressed in immune cells, specifically macrophages.

Its subcellular location is the late endosome membrane. It localises to the cell membrane. It is found in the early endosome membrane. The protein resides in the recycling endosome membrane. The protein localises to the cytoplasmic vesicle. Its subcellular location is the phagosome membrane. It catalyses the reaction Na(+)(in) + H(+)(out) = Na(+)(out) + H(+)(in). The catalysed reaction is K(+)(in) + H(+)(out) = K(+)(out) + H(+)(in). Endosomal Na(+), K(+)/H(+) antiporter. Mediates the electroneutral exchange of endosomal luminal H(+) for a cytosolic Na(+) or K(+). By facilitating proton efflux, SLC9A9 counteracts the acidity generated by vacuolar (V)-ATPase, thereby limiting luminal acidification. Regulates organellar pH and consequently, endosome maturation and endocytic trafficking of plasma membrane receptors and neurotransporters. Promotes the recycling of transferrin receptors back to the cell surface to facilitate additional iron uptake in the brain. Regulates synaptic transmission by regulating the luminal pH of axonal endosomes. Regulates phagosome lumenal pH, thus affecting phagosome maturation, and consequently, microbicidal activity in macrophages. Can also be active at the cell surface of specialized cells, e.g., in the inner ear hair bundles uses the high K(+) of the endolymph to regulate intracelular pH. This chain is Sodium/hydrogen exchanger 9 (Slc9a9), found in Mus musculus (Mouse).